The chain runs to 246 residues: Octanoyltransferase (246 aa).

The region spanning 38-213 (AQQSDEFWVL…FLAKRLGLTP (176 aa)) is the BPL/LPL catalytic domain. Residues 77–84 (RGGQVTYH), 144–146 (SLG), and 157–159 (GLA) contribute to the substrate site. Cysteine 175 acts as the Acyl-thioester intermediate in catalysis. The interval 225–246 (RQENVTTGGDPGSALTQQPERL) is disordered.

The protein belongs to the LipB family.

The protein localises to the cytoplasm. The enzyme catalyses octanoyl-[ACP] + L-lysyl-[protein] = N(6)-octanoyl-L-lysyl-[protein] + holo-[ACP] + H(+). The protein operates within protein modification; protein lipoylation via endogenous pathway; protein N(6)-(lipoyl)lysine from octanoyl-[acyl-carrier-protein]: step 1/2. Its function is as follows. Catalyzes the transfer of endogenously produced octanoic acid from octanoyl-acyl-carrier-protein onto the lipoyl domains of lipoate-dependent enzymes. Lipoyl-ACP can also act as a substrate although octanoyl-ACP is likely to be the physiological substrate. The polypeptide is Octanoyltransferase (Alcanivorax borkumensis (strain ATCC 700651 / DSM 11573 / NCIMB 13689 / SK2)).